The sequence spans 208 residues: ATP-dependent Clp protease proteolytic subunit 2 (208 aa).

Serine 102 serves as the catalytic Nucleophile. The active site involves histidine 127.

It belongs to the peptidase S14 family. In terms of assembly, fourteen ClpP subunits assemble into 2 heptameric rings which stack back to back to give a disk-like structure with a central cavity, resembling the structure of eukaryotic proteasomes.

It is found in the cytoplasm. The catalysed reaction is Hydrolysis of proteins to small peptides in the presence of ATP and magnesium. alpha-casein is the usual test substrate. In the absence of ATP, only oligopeptides shorter than five residues are hydrolyzed (such as succinyl-Leu-Tyr-|-NHMec, and Leu-Tyr-Leu-|-Tyr-Trp, in which cleavage of the -Tyr-|-Leu- and -Tyr-|-Trp bonds also occurs).. Cleaves peptides in various proteins in a process that requires ATP hydrolysis. Has a chymotrypsin-like activity. Plays a major role in the degradation of misfolded proteins. The polypeptide is ATP-dependent Clp protease proteolytic subunit 2 (Chelativorans sp. (strain BNC1)).